A 352-amino-acid polypeptide reads, in one-letter code: D-arabitol-phosphate dehydrogenase (352 aa).

Residues C43, H65, C96, C99, C102, C110, and E151 each contribute to the Mn(2+) site.

Belongs to the zinc-containing alcohol dehydrogenase family. As to quaternary structure, homotetramer. Requires Mn(2+) as cofactor.

The catalysed reaction is D-arabinitol 1-phosphate + NAD(+) = D-xylulose 5-phosphate + NADH + H(+). Inhibited by EDTA, 4-hydroxymercuribenzoic acid (PHMB), mercury and zinc ions at a concentration of 2 mM. Involved in the arabitol catabolism via the arabitol phosphate route. Catalyzes only the transformation of D-arabitol 1-phosphate (Arb1P) and D-arabitol 5-phosphate (Arb5P) into D-xylulose 5-phosphate (Xlu5P) and ribulose 5-phosphate, respectively. It can use both NAD and NADP. In Enterococcus avium (Streptococcus avium), this protein is D-arabitol-phosphate dehydrogenase.